A 346-amino-acid chain; its full sequence is UDP-3-O-acylglucosamine N-acyltransferase (346 aa).

H253 acts as the Proton acceptor in catalysis.

Belongs to the transferase hexapeptide repeat family. LpxD subfamily. In terms of assembly, homotrimer.

The catalysed reaction is a UDP-3-O-[(3R)-3-hydroxyacyl]-alpha-D-glucosamine + a (3R)-hydroxyacyl-[ACP] = a UDP-2-N,3-O-bis[(3R)-3-hydroxyacyl]-alpha-D-glucosamine + holo-[ACP] + H(+). Its pathway is bacterial outer membrane biogenesis; LPS lipid A biosynthesis. Its function is as follows. Catalyzes the N-acylation of UDP-3-O-acylglucosamine using 3-hydroxyacyl-ACP as the acyl donor. Is involved in the biosynthesis of lipid A, a phosphorylated glycolipid that anchors the lipopolysaccharide to the outer membrane of the cell. The sequence is that of UDP-3-O-acylglucosamine N-acyltransferase from Rickettsia peacockii (strain Rustic).